The sequence spans 302 residues: Elongation factor Ts (302 aa).

The tract at residues 80 to 83 (TDFV) is involved in Mg(2+) ion dislocation from EF-Tu.

This sequence belongs to the EF-Ts family.

The protein resides in the cytoplasm. Its function is as follows. Associates with the EF-Tu.GDP complex and induces the exchange of GDP to GTP. It remains bound to the aminoacyl-tRNA.EF-Tu.GTP complex up to the GTP hydrolysis stage on the ribosome. The chain is Elongation factor Ts from Gluconobacter oxydans (strain 621H) (Gluconobacter suboxydans).